The sequence spans 116 residues: MNNARLYQILRGPVFSEKSQMLGDSLGVQVFKIDSKATKLEVKKAVEMMFEGVEVLKVNTLNVKGKTKRFGKSIGRRNDYKKAYVTLKAGQDVQMADAGEEVANTTASTSETANNE.

The protein belongs to the universal ribosomal protein uL23 family. Part of the 50S ribosomal subunit. Contacts protein L29, and trigger factor when it is bound to the ribosome.

Its function is as follows. One of the early assembly proteins it binds 23S rRNA. One of the proteins that surrounds the polypeptide exit tunnel on the outside of the ribosome. Forms the main docking site for trigger factor binding to the ribosome. The polypeptide is Large ribosomal subunit protein uL23 (Psychrobacter arcticus (strain DSM 17307 / VKM B-2377 / 273-4)).